Here is a 269-residue protein sequence, read N- to C-terminus: Tungstate-binding protein TupA (269 aa).

The signal sequence occupies residues 1-17 (MKKIISLALALALSASA).

As to quaternary structure, the complex is composed of two ATP-binding proteins (TupC), two transmembrane proteins (TupB) and a solute-binding protein (TupA).

It localises to the periplasm. Functionally, part of an ABC transporter complex involved in ultra-high affinity tungstate uptake. Specifically binds tungstate. The protein is Tungstate-binding protein TupA of Campylobacter jejuni subsp. jejuni serotype O:2 (strain ATCC 700819 / NCTC 11168).